The chain runs to 1262 residues: SCL-interrupting locus protein homolog (1262 aa).

Residues 1–992 are interaction with RBM14; that stretch reads MNTRFPSSKM…IDSPTKVKKN (992 aa). Residues 220–762 form an interaction with CPAP region; the sequence is YKHGYITMDE…VSMEAQSSPG (543 aa). 3 disordered regions span residues 369 to 409, 454 to 551, and 650 to 670; these read RSSQ…QKIS, LCDA…LAPQ, and GGMG…AGPS. Composition is skewed to polar residues over residues 473–493, 500–512, and 540–551; these read PTNQ…QSST, QFRN…SLSV, and TLDSRQPSLAPQ. The tract at residues 567–760 is PIN1-binding; that stretch reads PMELQVPTPS…ELVSMEAQSS (194 aa). Phosphoserine is present on residues Ser733 and Ser760. Disordered regions lie at residues 782-804, 883-904, 925-959, and 1106-1129; these read NAAG…ISSE, APTE…EPYR, NASQ…KRHN, and SSDN…HVLN. Residues 792-803 show a composition bias toward basic and acidic residues; that stretch reads SQPKQDDTKISS. Polar residues predominate over residues 883–895; it reads APTEGASNSTELP. The span at 949-959 shows a compositional bias: basic residues; the sequence is NTHHARKKRHN. Phosphoserine is present on Ser1110. Positions 1116–1128 are enriched in basic and acidic residues; that stretch reads PPSHADSESDHVL.

As to quaternary structure, homodimer. Interacts with PIN1 via its WW domain. This interaction is dependent on Stil mitotic phosphorylation. Interacts with CPAP. Interacts with RBM14 and this interaction interferes with the interaction of STIL with CPAP. Forms a complex with CPAP and SASS6. nteracts (via N-terminus) with CEP85; this interaction is essential for efficient centriolar targeting of STIL and subsequent PLK4 activation. Post-translationally, ubiquitinated. In terms of processing, phosphorylated following the activation of the mitotic checkpoint. Ubiquitously expressed in adult and fetal tissues. Highly expressed in hematopoietic tissues such as thymus, bone marrow and spleen.

It is found in the cytoplasm. The protein localises to the cytosol. The protein resides in the cytoskeleton. Its subcellular location is the microtubule organizing center. It localises to the centrosome. It is found in the centriole. The protein localises to the cell cortex. Immediate-early gene. Plays an important role in embryonic development as well as in cellular growth and proliferation; its long-term silencing affects cell survival and cell cycle distribution as well as decreases CDK1 activity correlated with reduced phosphorylation of CDK1. Plays a role as a positive regulator of the sonic hedgehog pathway, acting downstream of PTCH1. Plays an important role in the regulation of centriole duplication. Required for the onset of procentriole formation and proper mitotic progression. During procentriole formation, is essential for the correct loading of SASS6 and CPAP to the base of the procentriole to initiate procentriole assembly. In complex with STIL acts as a modulator of PLK4-driven cytoskeletal rearrangements and directional cell motility. The sequence is that of SCL-interrupting locus protein homolog (Stil) from Mus musculus (Mouse).